A 545-amino-acid polypeptide reads, in one-letter code: Chaperonin GroEL (545 aa).

ATP contacts are provided by residues 30-33 (TLGP), lysine 51, 87-91 (DGTTT), glycine 415, and aspartate 496.

Belongs to the chaperonin (HSP60) family. Forms a cylinder of 14 subunits composed of two heptameric rings stacked back-to-back. Interacts with the co-chaperonin GroES.

Its subcellular location is the cytoplasm. The catalysed reaction is ATP + H2O + a folded polypeptide = ADP + phosphate + an unfolded polypeptide.. Together with its co-chaperonin GroES, plays an essential role in assisting protein folding. The GroEL-GroES system forms a nano-cage that allows encapsulation of the non-native substrate proteins and provides a physical environment optimized to promote and accelerate protein folding. This chain is Chaperonin GroEL, found in Chlorobaculum tepidum (strain ATCC 49652 / DSM 12025 / NBRC 103806 / TLS) (Chlorobium tepidum).